The primary structure comprises 169 residues: Lipoprotein signal peptidase (169 aa).

2 helical membrane-spanning segments follow: residues 56–76 (FLPP…VIIY) and 84–104 (QPLF…NLID). Residues D113 and D139 contribute to the active site. A helical membrane pass occupies residues 132–152 (WPIFNIADSAITIGACMLIIF).

The protein belongs to the peptidase A8 family.

The protein resides in the cell inner membrane. It catalyses the reaction Release of signal peptides from bacterial membrane prolipoproteins. Hydrolyzes -Xaa-Yaa-Zaa-|-(S,diacylglyceryl)Cys-, in which Xaa is hydrophobic (preferably Leu), and Yaa (Ala or Ser) and Zaa (Gly or Ala) have small, neutral side chains.. The protein operates within protein modification; lipoprotein biosynthesis (signal peptide cleavage). This protein specifically catalyzes the removal of signal peptides from prolipoproteins. This Chlorobium phaeovibrioides (strain DSM 265 / 1930) (Prosthecochloris vibrioformis (strain DSM 265)) protein is Lipoprotein signal peptidase.